A 316-amino-acid polypeptide reads, in one-letter code: Phospholipase A1 2 (316 aa).

The N-terminal stretch at 1 to 4 (ADDL) is a signal peptide. The propeptide occupies 5-14 (TTLRNGTLDR). A disulfide bridge connects residues C20 and C103. S153 functions as the Nucleophile in the catalytic mechanism. The active-site Charge relay system is the D181. 2 disulfide bridges follow: C192–C197 and C235–C240. The active-site Charge relay system is H242. 3 disulfide bridges follow: C257/C284, C258/C309, and C277/C282.

It belongs to the AB hydrolase superfamily. Lipase family. Expressed by the venom gland.

It localises to the secreted. It carries out the reaction a 1,2-diacyl-sn-glycero-3-phosphocholine + H2O = a 2-acyl-sn-glycero-3-phosphocholine + a fatty acid + H(+). Its function is as follows. Catalyzes the hydrolysis of phosphatidylcholine with phospholipase A1 activity. May act as an allergen and induce hemolytic activity. The sequence is that of Phospholipase A1 2 from Polistes dominula (European paper wasp).